A 202-amino-acid polypeptide reads, in one-letter code: Small ribosomal subunit protein uS5 (202 aa).

An S5 DRBM domain is found at 50–113 (LKQELLNLNL…REAKLNITPV (64 aa)).

This sequence belongs to the universal ribosomal protein uS5 family. As to quaternary structure, part of the 30S ribosomal subunit. Contacts protein S4.

With S4 and S12 plays an important role in translational accuracy. In Pyrobaculum calidifontis (strain DSM 21063 / JCM 11548 / VA1), this protein is Small ribosomal subunit protein uS5.